We begin with the raw amino-acid sequence, 286 residues long: Main hemagglutinin component type C (286 aa).

A 1-alpha repeat occupies 2 to 55 (SQTNANDLRNNEVFFISPSNNTNKVLDKISQSEVKLWNKLSGANQKWRLIYDTN). 2 consecutive Ricin B-type lectin domains span residues 12-140 (NEVF…FKFS) and 180-284 (DSSR…WIIN). Residues 56–100 (KQAYKIKVMDNTSLILTWNAPLSSVSVKTDTNGDNQYWYLLQNYI) form a 1-beta repeat. Residues 101–148 (SRNVIIRNYMNPNLVLQYNIDDTLMVSTQTSSSNQFFKFSNCIYEALN) form a 1-gamma repeat. One copy of the 2-alpha repeat lies at 149 to 193 (NRNCKLQTQLNSDRFLSKNLNSQIIVLWQWFDSSRQKWIIEYNET). The segment at 167-183 (NLNSQIIVLWQWFDSSR) is sugar-binding site 1. The 2-beta repeat unit spans residues 194 to 239 (KSAYTLKCQENNRYLTWIQNSNNYVETYQSTDSLIQYWNINYLDND). The 2-gamma repeat unit spans residues 240–286 (ASKYILYNLQDTNRVLDVYNSQIANGTHVIVDSYHGNTNQQWIINLI). The interval 256-279 (DVYNSQIANGTHVIVDSYHGNTNQ) is sugar-binding site 2.

As to quaternary structure, botulinum toxins are produced as progenitor toxins of large molecular sizes of 12S (M toxin) and 16S (L toxin). M toxin consists of a non-toxic, non-hemagglutinin component (NTNHA) and the neurotoxin. L toxin consists of the M toxin and the 3 subcomponents of hemagglutinin (HA). HA is composed of subcomponents of 70, 33, and 17 kDa. The 70 kDa subcomponent undergoes proteolytic processing and is split into HA-55 (also called HA-53 and HA3b) and HA-22-23 (also called HA3a). The stoichiometry of the whole complex has been modeled as one BoNT/C, one NTNHA, three HA-70, six HA-33 and three HA-17.

Its subcellular location is the secreted. Agglutinates human erythrocytes. The hemagglutinin (HA) component of the progenitor toxin protects the structural integrity of botulinum neurotoxin; may increase internalization of the neurotoxin into the bloodstream of the host. The hemagglutinin (HA) component is involved in binding to the upper small intestine through interactions with glycolipids and glycoproteins containing sialic acid moieties. Binds galactose or oligosaccharides with galactose at their non-reducing end. Binds eukaryotic host mucins; binding is inhibited by N-acetyl-beta-neuraminic acid, N-acetyl-D-galactosamine, galactose, and methyl N-acetyl-beta-neuraminic acid. Binds N-acetyl-beta-neuraminic acid, N-acetyl-D-galactosamine and galactose (but not glucose) via 2 sites. The sequence is that of Main hemagglutinin component type C from Clostridium botulinum C (Clostridium botulinum C bacteriophage).